We begin with the raw amino-acid sequence, 434 residues long: Nicotinate phosphoribosyltransferase (434 aa).

His242 carries the phosphohistidine; by autocatalysis modification.

Belongs to the NAPRTase family. In terms of processing, transiently phosphorylated on a His residue during the reaction cycle. Phosphorylation strongly increases the affinity for substrates and increases the rate of nicotinate D-ribonucleotide production. Dephosphorylation regenerates the low-affinity form of the enzyme, leading to product release.

The enzyme catalyses nicotinate + 5-phospho-alpha-D-ribose 1-diphosphate + ATP + H2O = nicotinate beta-D-ribonucleotide + ADP + phosphate + diphosphate. It participates in cofactor biosynthesis; NAD(+) biosynthesis; nicotinate D-ribonucleotide from nicotinate: step 1/1. Functionally, catalyzes the synthesis of beta-nicotinate D-ribonucleotide from nicotinate and 5-phospho-D-ribose 1-phosphate at the expense of ATP. This is Nicotinate phosphoribosyltransferase from Sinorhizobium medicae (strain WSM419) (Ensifer medicae).